The primary structure comprises 681 residues: Structure-specific endonuclease subunit SLX4 (681 aa).

2 disordered regions span residues Glu-239 to Leu-305 and Glu-505 to Leu-528. Residues Ser-251 to Leu-261 show a composition bias toward polar residues. A compositionally biased stretch (acidic residues) spans Ile-265–Asn-281. 2 stretches are compositionally biased toward polar residues: residues Gln-288–Leu-305 and Gln-518–Leu-528.

Belongs to the SLX4 family. In terms of assembly, forms a heterodimer with SLX1. Post-translationally, phosphorylated in response to DNA damage.

Its subcellular location is the nucleus. Functionally, regulatory subunit of the SLX1-SLX4 structure-specific endonuclease that resolves DNA secondary structures generated during DNA repair and recombination. Has endonuclease activity towards branched DNA substrates, introducing single-strand cuts in duplex DNA close to junctions with ss-DNA. This is Structure-specific endonuclease subunit SLX4 from Meyerozyma guilliermondii (strain ATCC 6260 / CBS 566 / DSM 6381 / JCM 1539 / NBRC 10279 / NRRL Y-324) (Yeast).